The chain runs to 142 residues: Transcriptional regulator MraZ (142 aa).

SpoVT-AbrB domains are found at residues 5 to 51 (ASSL…PRPV) and 77 to 120 (ASDV…DATK).

Belongs to the MraZ family. In terms of assembly, forms oligomers.

It is found in the cytoplasm. Its subcellular location is the nucleoid. The protein is Transcriptional regulator MraZ of Janthinobacterium sp. (strain Marseille) (Minibacterium massiliensis).